The sequence spans 89 residues: Acylphosphatase (89 aa).

Residues 4-89 (SYIAHISGRV…WQEHHFFSIG (86 aa)) enclose the Acylphosphatase-like domain. Residues R19 and N37 contribute to the active site.

Belongs to the acylphosphatase family.

The catalysed reaction is an acyl phosphate + H2O = a carboxylate + phosphate + H(+). This is Acylphosphatase (acyP) from Colwellia psychrerythraea (strain 34H / ATCC BAA-681) (Vibrio psychroerythus).